Reading from the N-terminus, the 78-residue chain is Protein SlyX homolog (78 aa).

The protein belongs to the SlyX family.

The polypeptide is Protein SlyX homolog (Photobacterium profundum (strain SS9)).